Here is a 209-residue protein sequence, read N- to C-terminus: MSSRKVLPTKINLINLRRQIRLIRTIKRLLENKREVLLLYLRQYADEYEKVYNEVSKVLSDVYSTYLQGVASEGLSTIQTYADSIPSSLNVNTSIKVLFGVKIPVVDLDESTIQQQPFGNLEISPYILKSREQMSYAFKKILTLIEIESSIRALSGELRKTQRLINAIDTSILPFYQSSSKYIKSVLDDRTREEFTRLKMVRKLLQRRR.

Belongs to the V-ATPase D subunit family. In terms of assembly, has multiple subunits with at least A(3), B(3), C, D, E, F, H, I and proteolipid K(x).

Its subcellular location is the cell membrane. Functionally, component of the A-type ATP synthase that produces ATP from ADP in the presence of a proton gradient across the membrane. The chain is A-type ATP synthase subunit D from Sulfolobus acidocaldarius (strain ATCC 33909 / DSM 639 / JCM 8929 / NBRC 15157 / NCIMB 11770).